Here is a 185-residue protein sequence, read N- to C-terminus: Peptidyl-tRNA hydrolase (185 aa).

Tyr14 lines the tRNA pocket. The Proton acceptor role is filled by His19. TRNA contacts are provided by Phe64, Asn66, and Asn112.

Belongs to the PTH family. Monomer.

It is found in the cytoplasm. It catalyses the reaction an N-acyl-L-alpha-aminoacyl-tRNA + H2O = an N-acyl-L-amino acid + a tRNA + H(+). Hydrolyzes ribosome-free peptidyl-tRNAs (with 1 or more amino acids incorporated), which drop off the ribosome during protein synthesis, or as a result of ribosome stalling. Functionally, catalyzes the release of premature peptidyl moieties from peptidyl-tRNA molecules trapped in stalled 50S ribosomal subunits, and thus maintains levels of free tRNAs and 50S ribosomes. The protein is Peptidyl-tRNA hydrolase of Alkaliphilus oremlandii (strain OhILAs) (Clostridium oremlandii (strain OhILAs)).